The following is a 1369-amino-acid chain: Probable tegument protein antigen 3 (1369 aa).

Residues 1347–1369 are disordered; that stretch reads DRRGAVPHDNPQYIPMDAMDPSQ.

Its subcellular location is the virion tegument. In Connochaetes taurinus (Blue wildebeest), this protein is Probable tegument protein antigen 3 (3).